A 120-amino-acid polypeptide reads, in one-letter code: Small ribosomal subunit protein bS16 (120 aa).

A disordered region spans residues G81–A120. The span at E95–K110 shows a compositional bias: basic and acidic residues. The segment covering A111 to A120 has biased composition (low complexity).

The protein belongs to the bacterial ribosomal protein bS16 family.

In Methylorubrum populi (strain ATCC BAA-705 / NCIMB 13946 / BJ001) (Methylobacterium populi), this protein is Small ribosomal subunit protein bS16.